We begin with the raw amino-acid sequence, 80 residues long: Histone H1.M6.1 (80 aa).

Residues 1 to 80 form a disordered region; sequence MSDAAVPPKK…KAVKKAPKKK (80 aa). The segment covering 11–80 has biased composition (basic residues); the sequence is ASPKKAAAKK…KAVKKAPKKK (70 aa).

The protein resides in the nucleus. It is found in the chromosome. This Trypanosoma cruzi protein is Histone H1.M6.1.